The chain runs to 325 residues: Tetraacyldisaccharide 4'-kinase (325 aa).

ATP is bound at residue 53-60 (SVGGNGKT).

This sequence belongs to the LpxK family.

The catalysed reaction is a lipid A disaccharide + ATP = a lipid IVA + ADP + H(+). The protein operates within glycolipid biosynthesis; lipid IV(A) biosynthesis; lipid IV(A) from (3R)-3-hydroxytetradecanoyl-[acyl-carrier-protein] and UDP-N-acetyl-alpha-D-glucosamine: step 6/6. Transfers the gamma-phosphate of ATP to the 4'-position of a tetraacyldisaccharide 1-phosphate intermediate (termed DS-1-P) to form tetraacyldisaccharide 1,4'-bis-phosphate (lipid IVA). The polypeptide is Tetraacyldisaccharide 4'-kinase (Pasteurella multocida (strain Pm70)).